The following is a 679-amino-acid chain: UvrABC system protein B (679 aa).

The region spanning 25–176 (KGVNTGKEFQ…NLRSYLRSLV (152 aa)) is the Helicase ATP-binding domain. An ATP-binding site is contributed by 38-45 (GATGTGKT). Positions 91 to 114 (YYDYYQPEAYVPVSDTYIAKTASI) match the Beta-hairpin motif. Residues 429 to 583 (QIEDLLSEIR…KKYNQVNGIT (155 aa)) form the Helicase C-terminal domain. The UVR domain maps to 639 to 674 (PDLIEKLEIKMKDAAKELNFEEAANLRDRIKKLRQK).

The protein belongs to the UvrB family. As to quaternary structure, forms a heterotetramer with UvrA during the search for lesions. Interacts with UvrC in an incision complex.

The protein localises to the cytoplasm. Functionally, the UvrABC repair system catalyzes the recognition and processing of DNA lesions. A damage recognition complex composed of 2 UvrA and 2 UvrB subunits scans DNA for abnormalities. Upon binding of the UvrA(2)B(2) complex to a putative damaged site, the DNA wraps around one UvrB monomer. DNA wrap is dependent on ATP binding by UvrB and probably causes local melting of the DNA helix, facilitating insertion of UvrB beta-hairpin between the DNA strands. Then UvrB probes one DNA strand for the presence of a lesion. If a lesion is found the UvrA subunits dissociate and the UvrB-DNA preincision complex is formed. This complex is subsequently bound by UvrC and the second UvrB is released. If no lesion is found, the DNA wraps around the other UvrB subunit that will check the other stand for damage. This is UvrABC system protein B from Prochlorococcus marinus (strain MIT 9301).